The following is a 26-amino-acid chain: Small toxic protein ShoB (26 aa).

A helical transmembrane segment spans residues 7 to 24; sequence LIKRVIKIIIAVLQLILL.

The protein localises to the membrane. Its function is as follows. Toxic component of a type I toxin-antitoxin (TA) system. May be a toxic protein; overexpression causes cessation of growth and rapid membrane depolarization. Overexpression induces stress-response and a number of membrane protein genes. In Escherichia coli (strain K12), this protein is Small toxic protein ShoB (shoB).